Consider the following 141-residue polypeptide: Hemoglobin subunit alpha (141 aa).

The Globin domain maps to 1–141; sequence VLSPADKTNV…VSTVLTSKYR (141 aa). Ser3 bears the Phosphoserine mark. An N6-succinyllysine modification is found at Lys7. Thr8 is modified (phosphothreonine). Lys11 bears the N6-succinyllysine mark. An N6-acetyllysine; alternate modification is found at Lys16. At Lys16 the chain carries N6-succinyllysine; alternate. Tyr24 carries the post-translational modification Phosphotyrosine. A Phosphoserine modification is found at Ser35. Position 40 is an N6-succinyllysine (Lys40). O2 is bound at residue His58. Residue His87 coordinates heme b. Ser102 is subject to Phosphoserine. The residue at position 108 (Thr108) is a Phosphothreonine. 2 positions are modified to phosphoserine: Ser124 and Ser131. A phosphothreonine mark is found at Thr134 and Thr137. Ser138 carries the phosphoserine modification.

It belongs to the globin family. Heterotetramer of two alpha chains and two beta chains. Red blood cells.

In terms of biological role, involved in oxygen transport from the lung to the various peripheral tissues. Functionally, hemopressin acts as an antagonist peptide of the cannabinoid receptor CNR1. Hemopressin-binding efficiently blocks cannabinoid receptor CNR1 and subsequent signaling. The chain is Hemoglobin subunit alpha (HBA) from Cynopterus sphinx (Indian short-nosed fruit bat).